A 411-amino-acid chain; its full sequence is Protrudin (411 aa).

The interval 1–27 (MQTSEREGSGPELSPSVMPEAPLESPP) is disordered. Residues 1–66 (MQTSEREGSG…AGDGVRYLLR (66 aa)) lie on the Cytoplasmic side of the membrane. The tract at residues 1-92 (MQTSEREGSG…LFLTLNEGAW (92 aa)) is sufficient for homooligomerization. Residues 1 to 205 (MQTSEREGSG…LYLLPLCWVL (205 aa)) form a sufficient for localization to endoplasmic reticulum tubular network and for interactions with REEP1, REEP5, ATL1, ATL2, ATL3 and SPAST region. Residues 51-64 (LEPLKDAGDGVRYL) are necessary for interaction with RAB11A and function in neurite outgrowth. The chain crosses the membrane as a helical span at residues 67–87 (WQMPLCSLLTCLGLNVLFLTL). Residue Asn-88 is a topological domain, lumenal. Residues 89–109 (EGAWYSVGALMISVPALLGYL) form a helical membrane-spanning segment. Over 110–187 (QEVCRARLPE…NPVVSSQFYG (78 aa)) the chain is Cytoplasmic. Positions 188–208 (ALLGTICMLYLLPLCWVLTLL) form an intramembrane region, helical. The Cytoplasmic segment spans residues 209–411 (NSTLFLGNVE…CASCNQTLSK (203 aa)). Residues 234–286 (MNPKQEEHAFESPPPPDVGGKGGLMDSTPALTPTEDLTPGSVEEAEEAEPDEE) are disordered. The tract at residues 271–361 (TPGSVEEAEE…GCSATFSVLK (91 aa)) is necessary for interaction with KIF5A. Acidic residues predominate over residues 276-286 (EEAEEAEPDEE). Residues 286 to 292 (EFKDAIE) form a necessary for interaction with VAPA region. The FYVE-type zinc finger occupies 344–410 (TNNFGNCTGC…VCASCNQTLS (67 aa)). 8 residues coordinate Zn(2+): Cys-350, Cys-353, Cys-366, Cys-369, Cys-374, Cys-377, Cys-402, and Cys-405.

As to quaternary structure, can form homooligomers (monomers, dimers and tetramers). Interacts with RAB11A (GDP-bound form); regulates RAB11A. Interacts with FKBP8; may negatively regulate ZFYVE27 phosphorylation. Interacts with VAPA (via MSP domain); may regulate ZFYVE27 retention in the endoplasmic reticulum and its function in cell projections formation. Interacts with VAPB (via MSP domain). Interacts with RAB11B (GDP-bound form), REEP1, REEP5, ATL1, ATL2, ATL3, SPAST, SURF4, KIF5A, KIF5B, KIF5C and RTN3. In terms of processing, phosphorylated. Phosphorylation is induced by NGF through the MAPK/ERK pathway and modulates interaction with RAB11A.

Its subcellular location is the recycling endosome membrane. The protein resides in the endoplasmic reticulum membrane. The protein localises to the cell projection. It localises to the growth cone membrane. Key regulator of RAB11-dependent vesicular trafficking during neurite extension through polarized membrane transport. Promotes axonal elongation and contributes to the establishment of neuronal cell polarity. Involved in nerve growth factor-induced neurite formation in VAPA-dependent manner. Contributes to both the formation and stabilization of the tubular ER network. Involved in ER morphogenesis by regulating the sheet-to-tubule balance and possibly the density of tubule interconnections. Acts as an adapter protein that facilitates the interaction of KIF5A with VAPA, VAPB, SURF4, RAB11A, RAB11B and RTN3 and the ZFYVE27-KIF5A complex contributes to the transport of these proteins in neurons. Can induce formation of neurite-like membrane protrusions in non-neuronal cells in a KIF5A/B-dependent manner. This is Protrudin (ZFYVE27) from Pongo abelii (Sumatran orangutan).